The chain runs to 359 residues: Peroxisome assembly protein 12 (359 aa).

Residues 1-24 (MSTTIRASQLASSISPKTEEKQPS) are Peroxisomal matrix-facing. Residues 25–52 (VFDIIAQENLATSIRPALQHLVKYLAFF) traverse the membrane as a helical segment. At 53–56 (KPKT) the chain is on the cytoplasmic side. The chain crosses the membrane as a helical span at residues 57–81 (FLSVHRNFDEYYIIFDLILQNHYLR). Residues 82–106 (NYGASFTENFYSMKRIASGTGNPPN) are Peroxisomal matrix-facing. The helical transmembrane segment at 107-128 (DGRERIMSLITLVGWPYVENKL) threads the bilayer. Over 129 to 133 (NQLYD) the chain is Cytoplasmic. The helical transmembrane segment at 134–184 (RLKEVYECRSWSSINGMKAKCQKMFVIIWPYIKTALKAVKSALQLAYILNR) threads the bilayer. Residues 185-253 (SSIHSPWLYF…ILGLPGIVSR (69 aa)) are Peroxisomal matrix-facing. Residues 254–281 (LFAYGLFFVQFLDYMYNTDLAKLTKTGL) form a helical membrane-spanning segment. At 282 to 359 (DGAIPSPPHK…NVQHLIRLFV (78 aa)) the chain is on the cytoplasmic side. Residues Cys307, Cys310, Cys328, and Cys331 each coordinate Zn(2+). An RING-type; degenerate zinc finger spans residues 307–346 (CPICLKKRVNDTALFVSGYVFCYTCINQYVNTYNKCPVTG).

This sequence belongs to the pex2/pex10/pex12 family. In terms of assembly, component of the PEX2-PEX10-PEX12 retrotranslocation channel.

The protein resides in the peroxisome membrane. The protein operates within protein modification; protein ubiquitination. Its function is as follows. Component of a retrotranslocation channel required for peroxisome organization by mediating export of the PEX5/prx-5 receptor from peroxisomes to the cytosol, thereby promoting PEX5/prx-5 recycling. The retrotranslocation channel is composed of PEX2/prx-2, PEX10/prx-10 and PEX12/prx-12; each subunit contributing transmembrane segments that coassemble into an open channel that specifically allows the passage of PEX5/prx-5 through the peroxisomal membrane. PEX12/prx-12 also regulates PEX5/prx-5 recycling by activating the E3 ubiquitin-protein ligase activity of PEX10/prx-10. When PEX5 recycling is compromised, PEX12/prx-12 stimulates PEX10-mediated polyubiquitination of PEX5/prx-5, leading to its subsequent degradation. This is Peroxisome assembly protein 12 (prx-12) from Caenorhabditis elegans.